Consider the following 137-residue polypeptide: NADH dehydrogenase [ubiquinone] 1 beta subcomplex subunit 7 (137 aa).

Gly2 is lipidated: N-myristoyl glycine. A CHCH domain is found at 56-98 (RDYCAHYLIRLLKCKRDSFPNFLACKQERHDWDYCEHRDYVMR). The Cx9C motif 1 motif lies at 59-69 (CAHYLIRLLKC). Intrachain disulfides connect Cys59/Cys90 and Cys69/Cys80. Ser73 is subject to Phosphoserine. Residues 80 to 90 (CKQERHDWDYC) carry the Cx9C motif 2 motif. The segment at 113 to 137 (KRREKKAAELAKGQGPGEVDPKVAL) is disordered.

The protein belongs to the complex I NDUFB7 subunit family. In terms of assembly, complex I is composed of 45 different subunits.

It localises to the mitochondrion inner membrane. The protein localises to the mitochondrion intermembrane space. In terms of biological role, accessory subunit of the mitochondrial membrane respiratory chain NADH dehydrogenase (Complex I), that is believed not to be involved in catalysis. Complex I functions in the transfer of electrons from NADH to the respiratory chain. The immediate electron acceptor for the enzyme is believed to be ubiquinone. The chain is NADH dehydrogenase [ubiquinone] 1 beta subcomplex subunit 7 (NDUFB7) from Gorilla gorilla gorilla (Western lowland gorilla).